A 921-amino-acid polypeptide reads, in one-letter code: Isoleucine--tRNA ligase (921 aa).

The 'HIGH' region signature appears at 57–67; it reads PYANGDIHMGH. Glutamate 552 provides a ligand contact to L-isoleucyl-5'-AMP. A 'KMSKS' region motif is present at residues 593-597; that stretch reads KMSKS. Position 596 (lysine 596) interacts with ATP. Zn(2+) contacts are provided by cysteine 888, cysteine 891, cysteine 908, and cysteine 911.

The protein belongs to the class-I aminoacyl-tRNA synthetase family. IleS type 1 subfamily. In terms of assembly, monomer. The cofactor is Zn(2+).

It localises to the cytoplasm. The enzyme catalyses tRNA(Ile) + L-isoleucine + ATP = L-isoleucyl-tRNA(Ile) + AMP + diphosphate. In terms of biological role, catalyzes the attachment of isoleucine to tRNA(Ile). As IleRS can inadvertently accommodate and process structurally similar amino acids such as valine, to avoid such errors it has two additional distinct tRNA(Ile)-dependent editing activities. One activity is designated as 'pretransfer' editing and involves the hydrolysis of activated Val-AMP. The other activity is designated 'posttransfer' editing and involves deacylation of mischarged Val-tRNA(Ile). The polypeptide is Isoleucine--tRNA ligase (Bacillus cereus (strain G9842)).